The chain runs to 241 residues: Methylthioribulose-1-phosphate dehydratase (241 aa).

The interval 1–20 is disordered; that stretch reads MSAIKDERNNDHLVQSHDPE. Cys-100 serves as a coordination point for substrate. Positions 117 and 119 each coordinate Zn(2+). Catalysis depends on Glu-146, which acts as the Proton donor/acceptor. His-202 contacts Zn(2+).

Belongs to the aldolase class II family. MtnB subfamily. Zn(2+) is required as a cofactor.

The protein resides in the cytoplasm. The enzyme catalyses 5-(methylsulfanyl)-D-ribulose 1-phosphate = 5-methylsulfanyl-2,3-dioxopentyl phosphate + H2O. It participates in amino-acid biosynthesis; L-methionine biosynthesis via salvage pathway; L-methionine from S-methyl-5-thio-alpha-D-ribose 1-phosphate: step 2/6. In terms of biological role, catalyzes the dehydration of methylthioribulose-1-phosphate (MTRu-1-P) into 2,3-diketo-5-methylthiopentyl-1-phosphate (DK-MTP-1-P). This Blastomyces gilchristii (strain SLH14081) (Blastomyces dermatitidis) protein is Methylthioribulose-1-phosphate dehydratase.